A 156-amino-acid polypeptide reads, in one-letter code: Small ribosomal subunit protein uS7 (156 aa).

The protein belongs to the universal ribosomal protein uS7 family. As to quaternary structure, part of the 30S ribosomal subunit. Contacts proteins S9 and S11.

In terms of biological role, one of the primary rRNA binding proteins, it binds directly to 16S rRNA where it nucleates assembly of the head domain of the 30S subunit. Is located at the subunit interface close to the decoding center, probably blocks exit of the E-site tRNA. This Streptococcus equi subsp. equi (strain 4047) protein is Small ribosomal subunit protein uS7.